The primary structure comprises 139 residues: D-ribose pyranase (139 aa).

H20 (proton donor) is an active-site residue. Substrate contacts are provided by residues D28, H106, and 128–130; that span reads YAN.

The protein belongs to the RbsD / FucU family. RbsD subfamily. Homodecamer.

The protein localises to the cytoplasm. It catalyses the reaction beta-D-ribopyranose = beta-D-ribofuranose. It functions in the pathway carbohydrate metabolism; D-ribose degradation; D-ribose 5-phosphate from beta-D-ribopyranose: step 1/2. Catalyzes the interconversion of beta-pyran and beta-furan forms of D-ribose. This Histophilus somni (strain 129Pt) (Haemophilus somnus) protein is D-ribose pyranase.